We begin with the raw amino-acid sequence, 122 residues long: Big defensin (122 aa).

A signal peptide spans 1-28 (MTRPSLVRCYSLFFTALIVMAIICPAWS). A propeptide spanning residues 29 to 34 (EEIPKS) is cleaved from the precursor. Disulfide bonds link cysteine 88/cysteine 119, cysteine 95/cysteine 114, and cysteine 99/cysteine 120.

The protein belongs to the big defensin family. Expressed in hemocytes.

It localises to the secreted. In terms of biological role, significantly inhibits the growth of Gram-negative and Gram-positive bacteria and fungi in vitro. The sequence is that of Big defensin from Argopecten irradians (Bay scallop).